Here is a 483-residue protein sequence, read N- to C-terminus: Glutamyl-tRNA(Gln) amidotransferase subunit A (483 aa).

Active-site charge relay system residues include Lys75 and Ser150. Ser174 functions as the Acyl-ester intermediate in the catalytic mechanism.

Belongs to the amidase family. GatA subfamily. Heterotrimer of A, B and C subunits.

The enzyme catalyses L-glutamyl-tRNA(Gln) + L-glutamine + ATP + H2O = L-glutaminyl-tRNA(Gln) + L-glutamate + ADP + phosphate + H(+). In terms of biological role, allows the formation of correctly charged Gln-tRNA(Gln) through the transamidation of misacylated Glu-tRNA(Gln) in organisms which lack glutaminyl-tRNA synthetase. The reaction takes place in the presence of glutamine and ATP through an activated gamma-phospho-Glu-tRNA(Gln). The chain is Glutamyl-tRNA(Gln) amidotransferase subunit A from Legionella pneumophila subsp. pneumophila (strain Philadelphia 1 / ATCC 33152 / DSM 7513).